The primary structure comprises 176 residues: MIDKRRTTRDLPQINERIRFPEIRVIDSDGSQLGIITPAEALRVAEEKELDLVLVSETASPPVCRIMDYGKYKFEQEKKAREAKKKQHTADIKEVKMRYKIDEHDYNVRVNQAQRFLKAGDKVKATITFRGREIQHSNLAEELLARMAKDLQDVAEVQQAPKKEGRNMMMMLSPKK.

It belongs to the IF-3 family. Monomer.

The protein localises to the cytoplasm. Its function is as follows. IF-3 binds to the 30S ribosomal subunit and shifts the equilibrium between 70S ribosomes and their 50S and 30S subunits in favor of the free subunits, thus enhancing the availability of 30S subunits on which protein synthesis initiation begins. The protein is Translation initiation factor IF-3 of Microcystis aeruginosa (strain NIES-843 / IAM M-2473).